Reading from the N-terminus, the 362-residue chain is D-alanine--D-alanine ligase (362 aa).

Residues 134-345 (KILAQRAGVP…YPDLITRLIR (212 aa)) form the ATP-grasp domain. 170–225 (GQLGTSNLFVKPSNQGSSVGITHVTDDSNYAEALAEAFKYDDKVLVEEGIVGTEVE) serves as a coordination point for ATP. The Mg(2+) site is built by aspartate 298, glutamate 312, and asparagine 314.

This sequence belongs to the D-alanine--D-alanine ligase family. Mg(2+) serves as cofactor. Mn(2+) is required as a cofactor.

Its subcellular location is the cytoplasm. The enzyme catalyses 2 D-alanine + ATP = D-alanyl-D-alanine + ADP + phosphate + H(+). The protein operates within cell wall biogenesis; peptidoglycan biosynthesis. In terms of biological role, cell wall formation. This Lactobacillus delbrueckii subsp. bulgaricus (strain ATCC 11842 / DSM 20081 / BCRC 10696 / JCM 1002 / NBRC 13953 / NCIMB 11778 / NCTC 12712 / WDCM 00102 / Lb 14) protein is D-alanine--D-alanine ligase.